The sequence spans 201 residues: MKKIGLFGGTFDPIHNGHLHIARAFADEIGLDAVVFLPAGGPYHKDAASASAADRLAMVELATAEDARFAVSDCDIVREGATYTFDTVQIFRQQFPSAQLWWLMGSDSLMKLHTWKKWQMLVRETNIAVAMRQGDSLHQTPRELHAWLGKSLQDGSVRILSAPMHNVSSTEIRRNLASQGVSDGIPPAAARYIREHGLYEK.

Belongs to the NadD family.

The catalysed reaction is nicotinate beta-D-ribonucleotide + ATP + H(+) = deamido-NAD(+) + diphosphate. It participates in cofactor biosynthesis; NAD(+) biosynthesis; deamido-NAD(+) from nicotinate D-ribonucleotide: step 1/1. Its function is as follows. Catalyzes the reversible adenylation of nicotinate mononucleotide (NaMN) to nicotinic acid adenine dinucleotide (NaAD). The sequence is that of Probable nicotinate-nucleotide adenylyltransferase from Neisseria meningitidis serogroup C / serotype 2a (strain ATCC 700532 / DSM 15464 / FAM18).